Here is an 876-residue protein sequence, read N- to C-terminus: Alanine--tRNA ligase (876 aa).

Residues histidine 565, histidine 569, cysteine 667, and histidine 671 each contribute to the Zn(2+) site.

This sequence belongs to the class-II aminoacyl-tRNA synthetase family. It depends on Zn(2+) as a cofactor.

The protein resides in the cytoplasm. It carries out the reaction tRNA(Ala) + L-alanine + ATP = L-alanyl-tRNA(Ala) + AMP + diphosphate. Functionally, catalyzes the attachment of alanine to tRNA(Ala) in a two-step reaction: alanine is first activated by ATP to form Ala-AMP and then transferred to the acceptor end of tRNA(Ala). Also edits incorrectly charged Ser-tRNA(Ala) and Gly-tRNA(Ala) via its editing domain. In Staphylococcus saprophyticus subsp. saprophyticus (strain ATCC 15305 / DSM 20229 / NCIMB 8711 / NCTC 7292 / S-41), this protein is Alanine--tRNA ligase.